The primary structure comprises 154 residues: 3-hydroxyacyl-[acyl-carrier-protein] dehydratase FabZ (154 aa).

The active site involves H54.

It belongs to the thioester dehydratase family. FabZ subfamily.

It localises to the cytoplasm. It carries out the reaction a (3R)-hydroxyacyl-[ACP] = a (2E)-enoyl-[ACP] + H2O. Functionally, involved in unsaturated fatty acids biosynthesis. Catalyzes the dehydration of short chain beta-hydroxyacyl-ACPs and long chain saturated and unsaturated beta-hydroxyacyl-ACPs. The polypeptide is 3-hydroxyacyl-[acyl-carrier-protein] dehydratase FabZ (Shewanella oneidensis (strain ATCC 700550 / JCM 31522 / CIP 106686 / LMG 19005 / NCIMB 14063 / MR-1)).